Consider the following 216-residue polypeptide: Peptide methionine sulfoxide reductase MsrA (216 aa).

Residue cysteine 54 is part of the active site.

Belongs to the MsrA Met sulfoxide reductase family.

It catalyses the reaction L-methionyl-[protein] + [thioredoxin]-disulfide + H2O = L-methionyl-(S)-S-oxide-[protein] + [thioredoxin]-dithiol. The enzyme catalyses [thioredoxin]-disulfide + L-methionine + H2O = L-methionine (S)-S-oxide + [thioredoxin]-dithiol. Its function is as follows. Has an important function as a repair enzyme for proteins that have been inactivated by oxidation. Catalyzes the reversible oxidation-reduction of methionine sulfoxide in proteins to methionine. In Xanthomonas campestris pv. campestris (strain ATCC 33913 / DSM 3586 / NCPPB 528 / LMG 568 / P 25), this protein is Peptide methionine sulfoxide reductase MsrA.